Consider the following 414-residue polypeptide: Esterase FrsA (414 aa).

It belongs to the FrsA family.

It carries out the reaction a carboxylic ester + H2O = an alcohol + a carboxylate + H(+). In terms of biological role, catalyzes the hydrolysis of esters. The sequence is that of Esterase FrsA from Escherichia coli O8 (strain IAI1).